The primary structure comprises 446 residues: uncharacterized protein (446 aa).

2 positions are modified to phosphoserine: Ser-393 and Ser-397. The segment at 411 to 431 is disordered; sequence LSSTERRDLDRVRDKQKKQDQ.

Belongs to the IFRD family.

Its subcellular location is the cytoplasm. This is an uncharacterized protein from Schizosaccharomyces pombe (strain 972 / ATCC 24843) (Fission yeast).